The following is a 130-amino-acid chain: Small ribosomal subunit protein uS9 (130 aa).

The protein belongs to the universal ribosomal protein uS9 family.

This chain is Small ribosomal subunit protein uS9, found in Ralstonia nicotianae (strain ATCC BAA-1114 / GMI1000) (Ralstonia solanacearum).